Consider the following 629-residue polypeptide: tRNA uridine 5-carboxymethylaminomethyl modification enzyme MnmG (629 aa).

FAD is bound by residues 13–18 (GGGHAG), valine 125, and serine 180. 273–287 (GPRYCPSIEDKVMRF) serves as a coordination point for NAD(+). Glutamine 370 contributes to the FAD binding site.

Belongs to the MnmG family. As to quaternary structure, homodimer. Heterotetramer of two MnmE and two MnmG subunits. The cofactor is FAD.

The protein localises to the cytoplasm. Its function is as follows. NAD-binding protein involved in the addition of a carboxymethylaminomethyl (cmnm) group at the wobble position (U34) of certain tRNAs, forming tRNA-cmnm(5)s(2)U34. The polypeptide is tRNA uridine 5-carboxymethylaminomethyl modification enzyme MnmG (Enterobacter sp. (strain 638)).